The sequence spans 209 residues: ATP phosphoribosyltransferase (209 aa).

The protein belongs to the ATP phosphoribosyltransferase family. Short subfamily. As to quaternary structure, heteromultimer composed of HisG and HisZ subunits.

The protein resides in the cytoplasm. The catalysed reaction is 1-(5-phospho-beta-D-ribosyl)-ATP + diphosphate = 5-phospho-alpha-D-ribose 1-diphosphate + ATP. Its pathway is amino-acid biosynthesis; L-histidine biosynthesis; L-histidine from 5-phospho-alpha-D-ribose 1-diphosphate: step 1/9. Catalyzes the condensation of ATP and 5-phosphoribose 1-diphosphate to form N'-(5'-phosphoribosyl)-ATP (PR-ATP). Has a crucial role in the pathway because the rate of histidine biosynthesis seems to be controlled primarily by regulation of HisG enzymatic activity. This Sulfurimonas denitrificans (strain ATCC 33889 / DSM 1251) (Thiomicrospira denitrificans (strain ATCC 33889 / DSM 1251)) protein is ATP phosphoribosyltransferase.